Reading from the N-terminus, the 157-residue chain is Ribonuclease H (157 aa).

The region spanning 3–144 (NSKTVHLYTD…CDELARDAAT (142 aa)) is the RNase H type-1 domain. Asp12, Glu50, Asp72, and Asp136 together coordinate Mg(2+).

The protein belongs to the RNase H family. As to quaternary structure, monomer. Mg(2+) serves as cofactor.

It is found in the cytoplasm. It catalyses the reaction Endonucleolytic cleavage to 5'-phosphomonoester.. In terms of biological role, endonuclease that specifically degrades the RNA of RNA-DNA hybrids. In Idiomarina loihiensis (strain ATCC BAA-735 / DSM 15497 / L2-TR), this protein is Ribonuclease H.